A 158-amino-acid polypeptide reads, in one-letter code: Protein Smg homolog (158 aa).

It belongs to the Smg family.

This Alteromonas mediterranea (strain DSM 17117 / CIP 110805 / LMG 28347 / Deep ecotype) protein is Protein Smg homolog.